The following is a 121-amino-acid chain: Protein TCL1B5 (121 aa).

The protein belongs to the TCL1 family.

The polypeptide is Protein TCL1B5 (Tcl1b5) (Mus musculus (Mouse)).